The chain runs to 225 residues: Shikimate kinase (225 aa).

Residue 27 to 32 (GAGKTT) participates in ATP binding. A Mg(2+)-binding site is contributed by Thr31. Residues Asp49, Arg73, and Gly95 each coordinate substrate. Arg132 contacts ATP. Residue Arg150 coordinates substrate. The segment at 186–225 (GGSEPDEAADAAGGSEPDEAADAAGGSEPDEAADAAGGKR) is disordered.

Belongs to the shikimate kinase family. Monomer. Requires Mg(2+) as cofactor.

It is found in the cytoplasm. It catalyses the reaction shikimate + ATP = 3-phosphoshikimate + ADP + H(+). Its pathway is metabolic intermediate biosynthesis; chorismate biosynthesis; chorismate from D-erythrose 4-phosphate and phosphoenolpyruvate: step 5/7. Catalyzes the specific phosphorylation of the 3-hydroxyl group of shikimic acid using ATP as a cosubstrate. The sequence is that of Shikimate kinase from Frankia casuarinae (strain DSM 45818 / CECT 9043 / HFP020203 / CcI3).